Here is a 428-residue protein sequence, read N- to C-terminus: Ribulose bisphosphate carboxylase (428 aa).

The active-site Proton acceptor is Lys151. Lys153 contacts substrate. 3 residues coordinate Mg(2+): Lys177, Asp179, and Glu180. Lys177 is subject to N6-carboxylysine. Residue His270 is the Proton acceptor of the active site. Substrate contacts are provided by residues Arg271, His303, 354-356 (SGG), and 376-379 (QFGG).

The protein belongs to the RuBisCO large chain family. Type III subfamily. In terms of assembly, homodimer. In contrast to form I RuBisCO, the form III RuBisCO is composed solely of large subunits. Mg(2+) is required as a cofactor.

The enzyme catalyses 2 (2R)-3-phosphoglycerate + 2 H(+) = D-ribulose 1,5-bisphosphate + CO2 + H2O. It catalyses the reaction D-ribulose 1,5-bisphosphate + O2 = 2-phosphoglycolate + (2R)-3-phosphoglycerate + 2 H(+). With respect to regulation, reversibly inhibited by O(2). Its function is as follows. Catalyzes the addition of molecular CO(2) and H(2)O to ribulose 1,5-bisphosphate (RuBP), generating two molecules of 3-phosphoglycerate (3-PGA). Functions in an archaeal AMP degradation pathway, together with AMP phosphorylase and R15P isomerase. The sequence is that of Ribulose bisphosphate carboxylase from Methanosarcina acetivorans (strain ATCC 35395 / DSM 2834 / JCM 12185 / C2A).